The chain runs to 208 residues: High frequency lysogenization protein HflD homolog (208 aa).

Belongs to the HflD family.

It localises to the cytoplasm. Its subcellular location is the cell inner membrane. In Yersinia enterocolitica serotype O:8 / biotype 1B (strain NCTC 13174 / 8081), this protein is High frequency lysogenization protein HflD homolog.